Consider the following 86-residue polypeptide: UPF0457 protein BCE33L2265 (86 aa).

It belongs to the UPF0457 family.

This chain is UPF0457 protein BCE33L2265, found in Bacillus cereus (strain ZK / E33L).